The primary structure comprises 290 residues: Iron-sulfur cluster carrier protein (290 aa).

Residue 47–54 participates in ATP binding; sequence GKGGVGKS.

Belongs to the Mrp/NBP35 ATP-binding proteins family. Homodimer.

In terms of biological role, binds and transfers iron-sulfur (Fe-S) clusters to target apoproteins. Can hydrolyze ATP. In Methanocaldococcus jannaschii (strain ATCC 43067 / DSM 2661 / JAL-1 / JCM 10045 / NBRC 100440) (Methanococcus jannaschii), this protein is Iron-sulfur cluster carrier protein.